A 229-amino-acid polypeptide reads, in one-letter code: Small ribosomal subunit protein uS5 (229 aa).

The S5 DRBM domain occupies Leu61–Val124.

Belongs to the universal ribosomal protein uS5 family. Part of the 30S ribosomal subunit. Contacts protein S4.

In terms of biological role, with S4 and S12 plays an important role in translational accuracy. The sequence is that of Small ribosomal subunit protein uS5 from Methanococcus maripaludis (strain C6 / ATCC BAA-1332).